A 571-amino-acid polypeptide reads, in one-letter code: Proline--tRNA ligase (571 aa).

It belongs to the class-II aminoacyl-tRNA synthetase family. ProS type 1 subfamily. In terms of assembly, homodimer.

Its subcellular location is the cytoplasm. It catalyses the reaction tRNA(Pro) + L-proline + ATP = L-prolyl-tRNA(Pro) + AMP + diphosphate. In terms of biological role, catalyzes the attachment of proline to tRNA(Pro) in a two-step reaction: proline is first activated by ATP to form Pro-AMP and then transferred to the acceptor end of tRNA(Pro). As ProRS can inadvertently accommodate and process non-cognate amino acids such as alanine and cysteine, to avoid such errors it has two additional distinct editing activities against alanine. One activity is designated as 'pretransfer' editing and involves the tRNA(Pro)-independent hydrolysis of activated Ala-AMP. The other activity is designated 'posttransfer' editing and involves deacylation of mischarged Ala-tRNA(Pro). The misacylated Cys-tRNA(Pro) is not edited by ProRS. The chain is Proline--tRNA ligase from Shewanella baltica (strain OS195).